A 222-amino-acid polypeptide reads, in one-letter code: FCS-Like Zinc finger 13 (222 aa).

Residues 149-192 form an FLZ-type zinc finger; the sequence is EFLSSCCLCKKKLQGKDIYMYKGEMGFCSAECRSVQIMNDERQE.

The protein belongs to the FLZ family. As to quaternary structure, interacts with KIN10 and KIN11 via its FLZ-type zinc finger domain. Interacts with KINB1, KINB2, KINB3 and SNF4 via its N-terminal part.

The protein resides in the nucleus. It is found in the cytoplasm. Functionally, may act as an adapter to facilitate the interaction of SnRK1 complex with effector proteins, conferring tissue- and stimulus-type specific differences in the SnRK1 regulation pathway. This chain is FCS-Like Zinc finger 13, found in Arabidopsis thaliana (Mouse-ear cress).